Reading from the N-terminus, the 173-residue chain is Small ribosomal subunit protein uS5 (173 aa).

The S5 DRBM domain occupies 17 to 80 (WQERVIQIRR…ADGKKQLIDV (64 aa)).

The protein belongs to the universal ribosomal protein uS5 family. In terms of assembly, part of the 30S ribosomal subunit. Contacts proteins S4 and S8.

Functionally, with S4 and S12 plays an important role in translational accuracy. In terms of biological role, located at the back of the 30S subunit body where it stabilizes the conformation of the head with respect to the body. The chain is Small ribosomal subunit protein uS5 from Crocosphaera subtropica (strain ATCC 51142 / BH68) (Cyanothece sp. (strain ATCC 51142)).